Consider the following 263-residue polypeptide: Hydroxyacylglutathione hydrolase (263 aa).

The Zn(2+) site is built by His-56, His-58, Asp-60, His-61, His-115, Asp-135, and His-175.

The protein belongs to the metallo-beta-lactamase superfamily. Glyoxalase II family. As to quaternary structure, monomer. The cofactor is Zn(2+).

The enzyme catalyses an S-(2-hydroxyacyl)glutathione + H2O = a 2-hydroxy carboxylate + glutathione + H(+). Its pathway is secondary metabolite metabolism; methylglyoxal degradation; (R)-lactate from methylglyoxal: step 2/2. In terms of biological role, thiolesterase that catalyzes the hydrolysis of S-D-lactoyl-glutathione to form glutathione and D-lactic acid. In Polaromonas sp. (strain JS666 / ATCC BAA-500), this protein is Hydroxyacylglutathione hydrolase.